Reading from the N-terminus, the 55-residue chain is Large ribosomal subunit protein bL33 (55 aa).

It belongs to the bacterial ribosomal protein bL33 family.

In Proteus mirabilis (strain HI4320), this protein is Large ribosomal subunit protein bL33.